Consider the following 1604-residue polypeptide: Putative surface cell antigen sca2 (1604 aa).

Residues 1-33 (MSLQNSHSKKYVLTFFMSTCLLTSSFLSTSARA) form the signal peptide. Disordered regions lie at residues 324-354 (TTKPFTKHSRTTTNTAGISSGVPFDTGRTKP), 554-603 (NVNN…SNPN), and 1183-1240 (QQEN…KSLL). The span at 554-564 (NVNNNSNKGQN) shows a compositional bias: low complexity. Pro residues predominate over residues 568–587 (ILPPTPPLNGSMPPSPPPPL). 2 stretches are compositionally biased toward basic and acidic residues: residues 1193-1213 (SSTKDDPQPEDSNKKSEKSDS) and 1227-1240 (SKNDKSSDDKKSLL). Residues 1325–1604 (EASINRGVWI…QGLIKLKVNL (280 aa)) form the Autotransporter domain.

The protein localises to the cell outer membrane. The polypeptide is Putative surface cell antigen sca2 (sca2) (Rickettsia felis (strain ATCC VR-1525 / URRWXCal2) (Rickettsia azadi)).